Here is a 778-residue protein sequence, read N- to C-terminus: Aconitate hydratase, mitochondrial (778 aa).

The transit peptide at 1–16 directs the protein to the mitochondrion; it reads MLSARSAIKRPIVRGL. Substrate is bound by residues Q95 and 188-190; that span reads DSH. C382 lines the [4Fe-4S] cluster pocket. S391 is modified (phosphoserine). Position 409 is a phosphothreonine (T409). Residues C445 and C448 each contribute to the [4Fe-4S] cluster site. Substrate contacts are provided by R471 and R476. A Phosphoserine modification is found at S556. Substrate is bound by residues R604 and 667-668; that span reads SR.

This sequence belongs to the aconitase/IPM isomerase family. In terms of assembly, monomer. Binds to mitochondrial DNA (mtDNA) and identified as component of mitochondrial nucleoids. [4Fe-4S] cluster is required as a cofactor.

It localises to the mitochondrion. The protein resides in the cytoplasm. The catalysed reaction is citrate = D-threo-isocitrate. It functions in the pathway carbohydrate metabolism; tricarboxylic acid cycle; isocitrate from oxaloacetate: step 2/2. Its activity is regulated as follows. Subject to catabolite regulation. Its function is as follows. Catalyzes the isomerization of citrate to isocitrate via cis-aconitate, a step in the citric acid cycle. Can also provide minor contributions to the reversible dehydration of (R)-homocitrate to cis-homoaconitate, a step in the alpha-aminoadipate pathway for lysine biosynthesis. Also plays an essential role in mtDNA maintenance. May directly protect mtDNA from accumulation of point mutations and ssDNA breaks as a component of mitochondrial nucleoids, or by preventing accumulation of iron citrate thereby alleviating its detrimental effects in mitochondria. The sequence is that of Aconitate hydratase, mitochondrial from Saccharomyces cerevisiae (strain ATCC 204508 / S288c) (Baker's yeast).